A 391-amino-acid chain; its full sequence is tRNA-specific 2-thiouridylase MnmA (391 aa).

Residues 9 to 16 (GMSGGVDS) and methionine 35 each bind ATP. The tract at residues 95 to 97 (NPD) is interaction with target base in tRNA. The active-site Nucleophile is the cysteine 100. Cysteine 100 and cysteine 196 are disulfide-bonded. Glycine 124 serves as a coordination point for ATP. Residues 146–148 (KDQ) are interaction with tRNA. Cysteine 196 acts as the Cysteine persulfide intermediate in catalysis. An interaction with tRNA region spans residues 308-309 (RY).

This sequence belongs to the MnmA/TRMU family.

Its subcellular location is the cytoplasm. It catalyses the reaction S-sulfanyl-L-cysteinyl-[protein] + uridine(34) in tRNA + AH2 + ATP = 2-thiouridine(34) in tRNA + L-cysteinyl-[protein] + A + AMP + diphosphate + H(+). Its function is as follows. Catalyzes the 2-thiolation of uridine at the wobble position (U34) of tRNA, leading to the formation of s(2)U34. The chain is tRNA-specific 2-thiouridylase MnmA from Burkholderia cenocepacia (strain HI2424).